The sequence spans 331 residues: MINTSIPLVDLHRHLDGNVRVNTIWELGHQHGIALPADSLETLAPFVQIQGKETSLVAFLKKLDWMVAVLADLDAVKRVAYENVADAALSGLDYAELRFSPYYMAMNHKLPIEGVVEAVIDGVKAGLKDYQVKINLIGIMSRSFGQAACTQELEGLLAHKQHLVAMDLAGDELGFPGELFNEHFKRVRDAGLAITAHAGEAAGSQSMWQAIQELGATRIGHGVNAIHDPKLMEYLAKHRIGIESCPTSNLHTSTVSSYAEHPFRTFMDAGVLISLNTDDPGVSAIDIKHEYRIAKSELGLSDAELAQVQRNGVEMAFLSESERKALYAAKA.

Histidine 12 and histidine 14 together coordinate Zn(2+). Substrate contacts are provided by histidine 14, aspartate 16, and glycine 170. Histidine 197 is a Zn(2+) binding site. The active-site Proton donor is glutamate 200. Residue aspartate 278 coordinates Zn(2+). Substrate is bound at residue aspartate 279.

Belongs to the metallo-dependent hydrolases superfamily. Adenosine and AMP deaminases family. Adenosine deaminase subfamily. Zn(2+) serves as cofactor.

The enzyme catalyses adenosine + H2O + H(+) = inosine + NH4(+). It carries out the reaction 2'-deoxyadenosine + H2O + H(+) = 2'-deoxyinosine + NH4(+). Functionally, catalyzes the hydrolytic deamination of adenosine and 2-deoxyadenosine. The protein is Adenosine deaminase of Shewanella sp. (strain ANA-3).